The sequence spans 202 residues: Transmembrane 4 L6 family member 1 (202 aa).

Residues 1–9 (MCSSKCTRY) lie on the Cytoplasmic side of the membrane. Residues 10–30 (IGHSLVVFAVLCIVANILLYF) form a helical membrane-spanning segment. Topologically, residues 31-49 (PNGETKYAYEDHLSRFVWF) are extracellular. Residues 50–70 (FAGIVGGGLLILLPAFVFLGL) form a helical membrane-spanning segment. The Cytoplasmic portion of the chain corresponds to 71–93 (EGEDCCGCWSCENYGKRCTMLSS). Residues 94–114 (IMAALIGIAGSGYCVIVAALG) traverse the membrane as a helical segment. Residues 115–161 (LAEGPKCGDSHGMWNYTFANTDGQYLLDPTTWSKCHEPNNIVEWNVT) lie on the Extracellular side of the membrane. N-linked (GlcNAc...) asparagine glycans are attached at residues Asn-129 and Asn-159. A helical membrane pass occupies residues 162-182 (LFSILLALGGLEFILCLIQVI). Residues 183–202 (NGVLEGMCSYCCSHQQQYDC) lie on the Cytoplasmic side of the membrane.

Belongs to the L6 tetraspanin family. As to quaternary structure, present in high molecular weight complexes in tumor cells. Interacts with SDCBP2.

The protein resides in the membrane. This Mesocricetus auratus (Golden hamster) protein is Transmembrane 4 L6 family member 1 (TM4SF1).